We begin with the raw amino-acid sequence, 374 residues long: F-box/LRR-repeat protein 8 (374 aa).

One can recognise an F-box domain in the interval 2-48 (AEPGEQLPEEVLALIFRHLPLPDRAAAARVCRAWAAAATCSAVWHDT).

As to quaternary structure, directly interacts with SKP1 and CUL1.

Its function is as follows. Substrate-recognition component of the SCF (SKP1-CUL1-F-box protein)-type E3 ubiquitin ligase complex. The polypeptide is F-box/LRR-repeat protein 8 (FBXL8) (Bos taurus (Bovine)).